Here is a 312-residue protein sequence, read N- to C-terminus: Plasminogen activator (312 aa).

Residues 1 to 20 form the signal peptide; that stretch reads MKKSSIVATIITILSGSANA. The Periplasmic portion of the chain corresponds to 21 to 31; sequence ASSQLIPNISP. A beta stranded transmembrane segment spans residues 32 to 40; it reads DSFTVAAST. The Extracellular portion of the chain corresponds to 41–70; it reads GMLSGKSHEMLYDAETGRKISQLDWKIKNV. Residues 71–80 traverse the membrane as a beta stranded segment; sequence AILKGDISWD. Residues 81–84 are Periplasmic-facing; the sequence is PYSF. The beta stranded transmembrane segment at 85–94 threads the bilayer; that stretch reads LTLNARGWTS. The Extracellular segment spans residues 95 to 131; that stretch reads LASGSGNMDDYDWMNENQSEWTDHSSHPATNVNHANE. Residues Asp-104 and Asp-106 contribute to the active site. The chain crosses the membrane as a beta stranded span at residues 132–140; sequence YDLNVKGWL. The Periplasmic portion of the chain corresponds to 141–145; that stretch reads LQDEN. A beta stranded transmembrane segment spans residues 146–154; it reads YKAGITAGY. Topologically, residues 155–194 are extracellular; sequence QETRFSWTATGGSYSYNNGAYTGNFPKGVRVIGYNQRFSM. Residues 195 to 204 traverse the membrane as a beta stranded segment; that stretch reads PYIGLAGQYR. Topologically, residues 205 to 207 are periplasmic; that stretch reads IND. The beta stranded transmembrane segment at 208-216 threads the bilayer; it reads FELNALFKF. Residues 217–244 lie on the Extracellular side of the membrane; sequence SDWVRAHDNDEHYMRDLTFREKTSGSRY. Catalysis depends on residues Asp-226 and His-228. A beta stranded membrane pass occupies residues 245–255; the sequence is YGTVINAGYYV. At 256–258 the chain is on the periplasmic side; sequence TPN. Residues 259–267 traverse the membrane as a beta stranded segment; the sequence is AKVFAEFTY. At 268 to 301 the chain is on the extracellular side; the sequence is SKYDEGKGGTQTIDKNSGDSVSIGGDAAGISNKN. A beta stranded membrane pass occupies residues 302–312; sequence YTVTAGLQYRF.

The protein belongs to the peptidase A26 family.

Its subcellular location is the cell outer membrane. It carries out the reaction Converts human Glu-plasminogen to plasmin by cleaving the 560-Arg-|-Val-561 peptide bond that is also hydrolyzed by the mammalian u-plasminogen activator and t-plasminogen activator. Also cleaves arginyl bonds in other proteins.. Its activity is regulated as follows. Requires bacterial lipopolysaccharide (LPS) for activation; addition of LPS to inactive protein reactivates it. In the absence of LPS the active site groove is slightly narrower, and peptide substrate binds deep within the active site groove, displacing the nucleophilic water molecule. Its function is as follows. In the mammalian host activates (cleaves) plasminogen to generate the serine protease plasmin. Plasmin degrades fibrin clots (fibrinolysis) and facilitates bacterial cell migration, enabling rapid dissemination of bacteria from the initial site of infection. Cleaves host plasminogen to generate plasmin and probably also has autocatalytic activity. Fibrinolytic activity prevails at 37 degrees Celsius whereas coagulase expression predominates at lower temperatures (28 degrees Celsius). Cleaves plasminogen; plasminogen cleavage is much higher than coagulase activity. This chain is Plasminogen activator, found in Yersinia pestis.